Here is a 1665-residue protein sequence, read N- to C-terminus: Cortactin-binding protein 2 (1665 aa).

Disordered regions lie at residues 1–23 (MATD…AGAT), 201–235 (EEKK…SEFD), 360–441 (ASHG…LHPG), 455–480 (GNAN…PTSR), and 499–617 (RFTS…PKPS). Residues 120-276 (KMQERMSTQL…EQLKRGNDNK (157 aa)) adopt a coiled-coil conformation. Polar residues predominate over residues 385 to 395 (GPSTGSTADLT). Arg-499 is modified (asymmetric dimethylarginine). Polar residues predominate over residues 584–594 (TVASPPSSLPQ). ANK repeat units lie at residues 710–740 (GRPT…DINY), 744–773 (DGHS…QVDA), 777–806 (NGFT…NINH), 810–839 (GGQT…DRSI), 843–872 (DGWT…PAHG), and 914–944 (EGWT…EPER). Residues 1447–1484 (CSKKKGESGAWRKVSTSPRKKSSRFSSPTWNKPDLSEE) form a disordered region. At Ser-1526 the chain carries Phosphoserine. Over residues 1544–1562 (SESDISKIADSRDDLRRFD) the composition is skewed to basic and acidic residues. The interval 1544–1648 (SESDISKIAD…RQIEINNNSK (105 aa)) is disordered. 2 stretches are compositionally biased toward polar residues: residues 1564-1576 (PGNN…TVNN) and 1584-1604 (KEVS…QSKT). Positions 1626–1640 (SQNTKRSSSSSNTRQ) are enriched in low complexity.

In terms of assembly, interacts with CTTN/cortactin SH3 domain. Interacts with STRN, STRN4/zinedin and MOB4/phocein; this interactions mediate the association with the STRIPAK core complex and may regulate dendritic spine distribution of the STRIPAK complex in hippocampal neurons. Activation of glutamate receptors weakens the interaction with STRN and STRN4.

It localises to the cytoplasm. It is found in the cell cortex. The protein resides in the cell projection. Its subcellular location is the dendritic spine. Functionally, regulates the dendritic spine distribution of CTTN/cortactin in hippocampal neurons, and thus controls dendritic spinogenesis and dendritic spine maintenance. Associates with the striatin-interacting phosphatase and kinase (STRIPAK) core complex to regulate dendritic spine distribution of the STRIPAK complex in hippocampal neurons. This is Cortactin-binding protein 2 (CTTNBP2) from Equus caballus (Horse).